The sequence spans 450 residues: Phosphoglucosamine mutase (450 aa).

Ser104 serves as the catalytic Phosphoserine intermediate. 4 residues coordinate Mg(2+): Ser104, Asp245, Asp247, and Asp249. A Phosphoserine modification is found at Ser104.

It belongs to the phosphohexose mutase family. The cofactor is Mg(2+). Post-translationally, activated by phosphorylation.

It catalyses the reaction alpha-D-glucosamine 1-phosphate = D-glucosamine 6-phosphate. Catalyzes the conversion of glucosamine-6-phosphate to glucosamine-1-phosphate. The protein is Phosphoglucosamine mutase of Phenylobacterium zucineum (strain HLK1).